Here is a 472-residue protein sequence, read N- to C-terminus: Proline--tRNA ligase (472 aa).

It belongs to the class-II aminoacyl-tRNA synthetase family. ProS type 3 subfamily. In terms of assembly, homodimer.

Its subcellular location is the cytoplasm. The catalysed reaction is tRNA(Pro) + L-proline + ATP = L-prolyl-tRNA(Pro) + AMP + diphosphate. Functionally, catalyzes the attachment of proline to tRNA(Pro) in a two-step reaction: proline is first activated by ATP to form Pro-AMP and then transferred to the acceptor end of tRNA(Pro). This Ureaplasma parvum serovar 3 (strain ATCC 27815 / 27 / NCTC 11736) protein is Proline--tRNA ligase.